The following is a 1084-amino-acid chain: Probable sucrose-phosphate synthase 1 (1084 aa).

Gly residues predominate over residues 25 to 46 (GGGGGGGGGGGGGGGGGGGGGV). Residues 25 to 61 (GGGGGGGGGGGGGGGGGGGGGVDPRSPAAGAASPRGP) form a disordered region. Positions 48 to 61 (PRSPAAGAASPRGP) are enriched in low complexity.

The protein belongs to the glycosyltransferase 1 family. In terms of assembly, homodimer or homotetramer. Expressed in leaves mesophyll cells, scutellum of germinating seedlings and pollen of immature inflorescences.

The enzyme catalyses beta-D-fructose 6-phosphate + UDP-alpha-D-glucose = sucrose 6(F)-phosphate + UDP + H(+). Its pathway is glycan biosynthesis; sucrose biosynthesis; sucrose from D-fructose 6-phosphate and UDP-alpha-D-glucose: step 1/2. With respect to regulation, activity is regulated by phosphorylation and moderated by concentration of metabolites and light. Its function is as follows. Plays a role in photosynthetic sucrose synthesis by catalyzing the rate-limiting step of sucrose biosynthesis from UDP-glucose and fructose- 6-phosphate. Involved in the regulation of carbon partitioning in the leaves of plants. May regulate the synthesis of sucrose and therefore play a major role as a limiting factor in the export of photoassimilates out of the leaf. Plays a role for sucrose availability that is essential for plant growth and fiber elongation. The sequence is that of Probable sucrose-phosphate synthase 1 (SPS1) from Oryza sativa subsp. indica (Rice).